We begin with the raw amino-acid sequence, 311 residues long: Giardin subunit alpha-8 (311 aa).

4 Annexin repeats span residues 5–73, 75–146, 154–223, and 227–295; these read RKAY…IRCW, NRHE…DRWM, NNVK…AAHY, and EPSK…SLWR.

Belongs to the annexin family. Giardin subunit alpha subfamily.

The protein localises to the cytoplasm. It is found in the cytoskeleton. Giardins are involved in parasite attachment to the intestinal mucosa and in the cytoskeletal disassembly and reassembly that marks the transition from infectious trophozoite to transmissible cyst. They may interact with other cytoskeletal proteins such as microtubules in the microribbons or crossbridges, to maintain the integrity of the ventral disk. This chain is Giardin subunit alpha-8, found in Giardia intestinalis (Giardia lamblia).